The following is a 426-amino-acid chain: Histone-binding protein RBBP7 (426 aa).

Ala-2 carries the post-translational modification N-acetylalanine. Ser-3 is subject to Phosphoserine. Lys-4 bears the N6-acetyllysine; alternate mark. A Glycyl lysine isopeptide (Lys-Gly) (interchain with G-Cter in SUMO2); alternate cross-link involves residue Lys-4. Lys-4 is covalently cross-linked (Glycyl lysine isopeptide (Lys-Gly) (interchain with G-Cter in ubiquitin); alternate). Thr-10 carries the phosphothreonine modification. WD repeat units lie at residues 47 to 122 (QWLP…KINH), 128 to 173 (RARY…LRLR), 181 to 217 (GLSW…KIVD), 228 to 269 (VVED…HLVD), 275 to 312 (VNCL…LHTF), 318 to 370 (EIFQ…LFIH), and 377 to 404 (ISDF…IWQM). Ser-95 bears the Phosphoserine mark. A Glycyl lysine isopeptide (Lys-Gly) (interchain with G-Cter in SUMO2) cross-link involves residue Lys-101. Position 119 is an N6-acetyllysine (Lys-119). Lys-155 is covalently cross-linked (Glycyl lysine isopeptide (Lys-Gly) (interchain with G-Cter in SUMO2)). Lys-159 carries the N6-acetyllysine; alternate modification. A Glycyl lysine isopeptide (Lys-Gly) (interchain with G-Cter in SUMO2); alternate cross-link involves residue Lys-159. A Phosphoserine modification is found at Ser-355.

This sequence belongs to the WD repeat RBAP46/RBAP48/MSI1 family. As to quaternary structure, binds directly to helix 1 of the histone fold of histone H4, a region that is not accessible when H4 is in chromatin. Subunit of the type B histone acetyltransferase (HAT) complex, composed of RBBP7 and HAT1. Subunit of the core histone deacetylase (HDAC) complex, which is composed of HDAC1, HDAC2, RBBP4 and RBBP7. The core HDAC complex associates with SIN3A, ARID4B/SAP180, SAP18, SAP30, SAP130, SUDS3/SAP45 and possibly ARID4A/RBP1 and ING1 to form the SIN3 HDAC complex. Component of the nucleosome remodeling and deacetylase (NuRD) repressor complex, composed of core proteins MTA1, MTA2, MTA3, RBBP4, RBBP7, HDAC1, HDAC2, MBD2, MBD3, and peripherally associated proteins CDK2AP1, CDK2AP2, GATAD2A, GATAD2B, CHD3, CHD4 and CHD5. The exact stoichiometry of the NuRD complex is unknown, and some subunits such as MBD2 and MBD3, GATAD2A and GATAD2B, and CHD3, CHD4 and CHD5 define mutually exclusive NuRD complexes. The NuRD complex may interact with MBD3L1. The NuRD complex may interact with MBD3L2. Subunit of the PRC2/EED-EZH2 complex, which is composed of at least EED, EZH2, RBBP4, RBBP7 and SUZ12. The PRC2/EED-EZH2 complex may also associate with HDAC1. Component of the NURF-1 ISWI chromatin remodeling complex (also called the nucleosome-remodeling factor (NURF) complex) at least composed of SMARCA1, BPTF, RBBP4 and RBBP7. Within the complex interacts with SMARCA1. Component of the BPFT-SMARCA1 complex at least composed of SMARCA1, BPFT, RBBP4 and RBBP7; the complex is catalytically inactive and does not remodel chromatin. Within the complex interacts with SMARCA1. Interacts with BRCA1. Interacts with CDK2AP1. Interacts with CENPA. Interacts with CHD3. Interacts with CHD4. Interacts with CREBBP, and this interaction may be enhanced by the binding of phosphorylated CREB1 to CREBBP. Interacts with HDAC7. Interacts with MTA1. Interacts with PWWP2B. Interacts with RB1 (via viral protein-binding domain). Interacts with SUV39H1.

Its subcellular location is the nucleus. In terms of biological role, core histone-binding subunit that may target chromatin remodeling factors, histone acetyltransferases and histone deacetylases to their histone substrates in a manner that is regulated by nucleosomal DNA. Component of several complexes which regulate chromatin metabolism. These include the type B histone acetyltransferase (HAT) complex, which is required for chromatin assembly following DNA replication; the core histone deacetylase (HDAC) complex, which promotes histone deacetylation and consequent transcriptional repression; the nucleosome remodeling and histone deacetylase complex (the NuRD complex), which promotes transcriptional repression by histone deacetylation and nucleosome remodeling; and the PRC2/EED-EZH2 complex, which promotes repression of homeotic genes during development; and the NURF (nucleosome remodeling factor) complex. This Pongo abelii (Sumatran orangutan) protein is Histone-binding protein RBBP7 (RBBP7).